We begin with the raw amino-acid sequence, 374 residues long: Pre-B-cell leukemia transcription factor 4 (374 aa).

One can recognise a PBC domain in the interval 14–209 (PRRLDTSDVL…VMTLRSRLLD (196 aa)). A PBC-A region spans residues 21 to 100 (DVLQQIMAIT…EGVCRPEKRG (80 aa)). Residues 103–209 (GAVARAGTAT…VMTLRSRLLD (107 aa)) form a PBC-B region. Positions 210 to 272 (ARRKRRNFSK…NKRIRYKKNM (63 aa)) form a DNA-binding region, homeobox; TALE-type. A disordered region spans residues 333-374 (QPPPGGGCLQSQAQGSWQGATPQPATASPAGDPGSINSSTSN). Polar residues predominate over residues 341 to 358 (LQSQAQGSWQGATPQPAT).

The protein belongs to the TALE/PBX homeobox family.

The protein localises to the nucleus. This is Pre-B-cell leukemia transcription factor 4 (PBX4) from Homo sapiens (Human).